The sequence spans 457 residues: Argininosuccinate lyase (457 aa).

The protein belongs to the lyase 1 family. Argininosuccinate lyase subfamily.

The protein resides in the cytoplasm. The catalysed reaction is 2-(N(omega)-L-arginino)succinate = fumarate + L-arginine. The protein operates within amino-acid biosynthesis; L-arginine biosynthesis; L-arginine from L-ornithine and carbamoyl phosphate: step 3/3. This Pasteurella multocida (strain Pm70) protein is Argininosuccinate lyase.